A 322-amino-acid polypeptide reads, in one-letter code: Cysteine protease YopT (322 aa).

Active-site residues include Cys139, His258, and Asp274.

Belongs to the peptidase C58 family. In terms of assembly, interacts with human ARHA.

The protein resides in the secreted. Its function is as follows. Cysteine protease, which is translocated into infected cells and plays a central role in pathogenesis by cleaving the C-terminus end of the human small GTPase RhoA/ARHA, a regulator of cytoskeleton. Once cleaved, ARHA loses its lipid modification, and is released from the cell membrane, leading to the subsequent disruption of actin cytoskeleton of the host cell. This chain is Cysteine protease YopT (yopT), found in Yersinia pestis.